The chain runs to 388 residues: AdoMet-dependent heme synthase (388 aa).

Residues 1–12 (MHNANHPHGNGH) are compositionally biased toward low complexity. The interval 1 to 29 (MHNANHPHGNGHPAEKKGMGAHSGAMNMP) is disordered. In terms of domain architecture, Radical SAM core spans 34–257 (DGSPACRLIA…TSMHLKATCA (224 aa)). [4Fe-4S] cluster is bound by residues Cys50, Cys54, and Cys57.

This sequence belongs to the radical SAM superfamily. Requires [4Fe-4S] cluster as cofactor.

It carries out the reaction Fe-coproporphyrin III + 2 S-adenosyl-L-methionine = heme b + 2 5'-deoxyadenosine + 2 L-methionine + 2 CO2. Its pathway is porphyrin-containing compound metabolism; protoheme biosynthesis. Functionally, involved in siroheme-dependent heme b biosynthesis. Catalyzes the conversion of Fe-coproporphyrin III into heme by the oxidative decarboxylation of two propionate side chains. The polypeptide is AdoMet-dependent heme synthase (Oleidesulfovibrio alaskensis (strain ATCC BAA-1058 / DSM 17464 / G20) (Desulfovibrio alaskensis)).